We begin with the raw amino-acid sequence, 132 residues long: Large-conductance mechanosensitive channel (132 aa).

2 consecutive transmembrane segments (helical) span residues 14–34 and 67–87; these read VIDL…VSSL and GNFI…FMFV.

The protein belongs to the MscL family. In terms of assembly, homopentamer.

It is found in the cell membrane. Functionally, channel that opens in response to stretch forces in the membrane lipid bilayer. May participate in the regulation of osmotic pressure changes within the cell. This is Large-conductance mechanosensitive channel from Bacillus cereus (strain AH820).